The primary structure comprises 921 residues: MAAVAADPAAAAVPASAEDRETQPEAMPDLDQQWRQIGNGRERPLRAGESWFLVEKHWYKQWEAYVKGGDQDASTFPGSINNSGLFEDQISWHLRERLVEGDDYVLLPAPAWNYLVSWYGLKDDQPPIERKVIELPGIRKVEVYPIELLLVQHSDMETALTIQFSYSDSVDLVLQTAREQFLVEPQEDTRLWTKNSEGSLDRLCNTQITLLDACLETGQLVIMETRNKDGTWPSAQLCGMNNMPDEDEDFQGQPGICGLTNLGNTCFMNSALQCLSNVPQLTEYFLNNRYLEELNFRNPLGMKGELAEAYADLVKQTWSGYHRSIVPNVFKNKVGHFASQFLGYQQHDSQELLSFLLDGLHEDLNRVKKKEYVELCNGAGRPDLEVAQEAWQNHKRRNDSVIVDTFHGLFKSTLVCPDCGNVSVTFDPFCYLSVPLPVCSRRVLEVFFVPMDPRRKPEQHRVVVPKKGNISDLCVALSTHTSVAPDKMIVADVFSHRFYKLYQLEDPLSGILDRDDIFVYEVTGRIEPVEGSRDDIVVPVYLRERTPSRDYNNSYYGLILFGHPLLVSVPRDRFSWEGLYNILMYRLSRYVTKPTSDDDDGDEKGDENEDEDVEDDSSSEEEKEEMSGPTDNDGTQESEQEQAGTSSGVTGRCPSLLDNSLHTSQWPPRRRRKQLFTLQTVNSNGTSDRTTSPEEAQTQPYIAMDWEPEMKRRYYDEVEAEGYVKHDCVGYMLKKNPVQLKECIKLFTTVETLEKENPWYCSSCKQHQLATKKLDLWMLPEVLIIHLKRFSFSKFSREKLDTLVQFPIRDLDFSEFVIKPKNESAPDLYKYDLIAVSNHYGGMRDGHYTTFACNKDSGQWHYFDDNSVSPVNENQIESKAAYVLFYQRQDVGRRQSQTASSETPTSPASSSTPNSDIMDVN.

Residues 1-16 are compositionally biased toward low complexity; that stretch reads MAAVAADPAAAAVPAS. The disordered stretch occupies residues 1–29; it reads MAAVAADPAAAAVPASAEDRETQPEAMPD. The DUSP domain occupies 28-133; the sequence is PDLDQQWRQI…DQPPIERKVI (106 aa). Lysine 194 is subject to N6-acetyllysine. Residues 257 to 889 form the USP domain; sequence CGLTNLGNTC…AAYVLFYQRQ (633 aa). The active-site Nucleophile is cysteine 266. Residues 592–697 are disordered; it reads TKPTSDDDDG…DRTTSPEEAQ (106 aa). A Phosphoserine modification is found at serine 596. Positions 597–624 are enriched in acidic residues; sequence DDDDGDEKGDENEDEDVEDDSSSEEEKE. Polar residues-rich tracts occupy residues 657–666 and 676–697; these read LDNSLHTSQW and FTLQ…EEAQ. Serine 692 is subject to Phosphoserine. The active-site Proton acceptor is histidine 847. Positions 893 to 921 are disordered; that stretch reads RRQSQTASSETPTSPASSSTPNSDIMDVN. Positions 895–915 are enriched in low complexity; that stretch reads QSQTASSETPTSPASSSTPNS. Serine 906 carries the post-translational modification Phosphoserine.

Belongs to the peptidase C19 family. As to quaternary structure, monomer. Associated component of the Polycomb group (PcG) multiprotein PRC1-like complex. Interacts with RANBP9/RANBPM. Interacts with BRCA2. Interacts with CHUK/IKKA. Interacts with NFKBIA. Interacts with SPRY3, RAE1, MYCBP2/PAM, and KCTD6.

It is found in the nucleus. The protein localises to the cytoplasm. Its subcellular location is the chromosome. The catalysed reaction is Thiol-dependent hydrolysis of ester, thioester, amide, peptide and isopeptide bonds formed by the C-terminal Gly of ubiquitin (a 76-residue protein attached to proteins as an intracellular targeting signal).. Functionally, protease that can remove conjugated ubiquitin from target proteins and polyubiquitin chains. Inhibits the degradation of target proteins by the proteasome. Cleaves preferentially 'Lys-6' and 'Lys-63'-linked ubiquitin chains. Has lower activity with 'Lys-11' and 'Lys-33'-linked ubiquitin chains, and extremely low activity with 'Lys-27', 'Lys-29' and 'Lys-48'-linked ubiquitin chains (in vitro). Plays a role in the regulation of pathways leading to NF-kappa-B activation. Plays a role in the regulation of DNA repair after double-stranded DNA breaks. Acts as a chromatin regulator via its association with the Polycomb group (PcG) multiprotein PRC1-like complex; may act by deubiquitinating components of the PRC1-like comple. Promotes cell proliferation by deubiquitinating phosphorylated E2F1x. This is Ubiquitin carboxyl-terminal hydrolase 11 from Rattus norvegicus (Rat).